A 317-amino-acid polypeptide reads, in one-letter code: tRNA dimethylallyltransferase (317 aa).

Glycine 21–serine 28 is a binding site for ATP. Residue threonine 23 to serine 28 coordinates substrate. The interaction with substrate tRNA stretch occupies residues aspartate 46–glutamine 49.

It belongs to the IPP transferase family. As to quaternary structure, monomer. The cofactor is Mg(2+).

The enzyme catalyses adenosine(37) in tRNA + dimethylallyl diphosphate = N(6)-dimethylallyladenosine(37) in tRNA + diphosphate. Its function is as follows. Catalyzes the transfer of a dimethylallyl group onto the adenine at position 37 in tRNAs that read codons beginning with uridine, leading to the formation of N6-(dimethylallyl)adenosine (i(6)A). This is tRNA dimethylallyltransferase from Nitrobacter hamburgensis (strain DSM 10229 / NCIMB 13809 / X14).